Reading from the N-terminus, the 475-residue chain is Ribulose bisphosphate carboxylase large chain (475 aa).

The propeptide occupies 1-2 (MS). At Pro-3 the chain carries N-acetylproline. Lys-14 is modified (N6,N6,N6-trimethyllysine). 2 residues coordinate substrate: Asn-123 and Thr-173. Lys-175 serves as the catalytic Proton acceptor. Lys-177 is a substrate binding site. 3 residues coordinate Mg(2+): Lys-201, Asp-203, and Glu-204. Lys-201 is subject to N6-carboxylysine. His-294 (proton acceptor) is an active-site residue. Residues Arg-295, His-327, and Ser-379 each contribute to the substrate site.

This sequence belongs to the RuBisCO large chain family. Type I subfamily. In terms of assembly, heterohexadecamer of 8 large chains and 8 small chains; disulfide-linked. The disulfide link is formed within the large subunit homodimers. The cofactor is Mg(2+). Post-translationally, the disulfide bond which can form in the large chain dimeric partners within the hexadecamer appears to be associated with oxidative stress and protein turnover.

It is found in the plastid. The protein resides in the chloroplast. It carries out the reaction 2 (2R)-3-phosphoglycerate + 2 H(+) = D-ribulose 1,5-bisphosphate + CO2 + H2O. The catalysed reaction is D-ribulose 1,5-bisphosphate + O2 = 2-phosphoglycolate + (2R)-3-phosphoglycerate + 2 H(+). Its function is as follows. RuBisCO catalyzes two reactions: the carboxylation of D-ribulose 1,5-bisphosphate, the primary event in carbon dioxide fixation, as well as the oxidative fragmentation of the pentose substrate in the photorespiration process. Both reactions occur simultaneously and in competition at the same active site. The protein is Ribulose bisphosphate carboxylase large chain of Eucalyptus globulus subsp. globulus (Tasmanian blue gum).